The chain runs to 316 residues: tRNA dimethylallyltransferase (316 aa).

17–24 provides a ligand contact to ATP; that stretch reads GPTASGKT. 19–24 provides a ligand contact to substrate; it reads TASGKT. 3 interaction with substrate tRNA regions span residues 42–45, 166–170, and 247–252; these read DSAL, QRLSR, and RCVGYR.

This sequence belongs to the IPP transferase family. Monomer. It depends on Mg(2+) as a cofactor.

It catalyses the reaction adenosine(37) in tRNA + dimethylallyl diphosphate = N(6)-dimethylallyladenosine(37) in tRNA + diphosphate. Catalyzes the transfer of a dimethylallyl group onto the adenine at position 37 in tRNAs that read codons beginning with uridine, leading to the formation of N6-(dimethylallyl)adenosine (i(6)A). This is tRNA dimethylallyltransferase from Salmonella typhi.